The sequence spans 782 residues: General transcription and DNA repair factor IIH helicase/translocase subunit XPB (782 aa).

The span at 1-11 (MGKRDRADRDK) shows a compositional bias: basic and acidic residues. Disordered regions lie at residues 1–51 (MGKR…ESGT) and 220–240 (ISKT…DPQG). The Nuclear localization signal signature appears at 6-18 (RADRDKKKSRKRH). A compositionally biased stretch (acidic residues) spans 21–30 (DEEDDEEDAP). A Helicase ATP-binding domain is found at 327-488 (MFGNGRARSG…DLNFLIGPKL (162 aa)). Residue 340 to 347 (LPCGAGKS) coordinates ATP. A DEVH box motif is present at residues 441–444 (DEVH). The region spanning 542–702 (RACQFLIKFH…LAGMEEEDLA (161 aa)) is the Helicase C-terminal domain. A Phosphoserine modification is found at Ser-686. Residue Ser-751 is modified to Phosphoserine; by CK2.

Belongs to the helicase family. RAD25/XPB subfamily. In terms of assembly, component of the 7-subunit TFIIH core complex composed of XPB/ERCC3, XPD/ERCC2, GTF2H1, GTF2H2, GTF2H3, GTF2H4 and GTF2H5, which is active in NER. The core complex associates with the 3-subunit CDK-activating kinase (CAK) module composed of CCNH/cyclin H, CDK7 and MNAT1 to form the 10-subunit holoenzyme (holo-TFIIH) active in transcription. Interacts with PUF60. Interacts with ATF7IP. Interacts with KAT2A; leading to KAT2A recruitment to promoters and acetylation of histones. Part of TBP-based Pol II pre-initiation complex (PIC), in which Pol II core assembles with general transcription factors and other specific initiation factors including GTF2E1, GTF2E2, GTF2F1, GTF2F2, TCEA1, ERCC2, ERCC3, GTF2H2, GTF2H3, GTF2H4, GTF2H5, GTF2A1, GTF2A2, GTF2B and TBP; this large multi-subunit PIC complex mediates DNA unwinding and targets Pol II core to the transcription start site where the first phosphodiester bond forms. Post-translationally, phosphorylation on Ser-751 by CK2 controls the 5'-excision activity of ERCC1-XPF endonuclease; phosphorylated protein inhibits the excision activity and thus NER. Dephosphorylation reactivates the 5'-excision step. Phosphorylation has no effect on transcription or the 3'-5' helicase activity.

The protein localises to the nucleus. It catalyses the reaction Couples ATP hydrolysis with the unwinding of duplex DNA by translocating in the 3'-5' direction.. The catalysed reaction is ATP + H2O = ADP + phosphate + H(+). Phosphorylation on Ser-751 by CK2 controls the 5'-excision activity of ERCC1-XPF endonuclease; phosphorylated protein inhibits the excision activity and thus NER. ATPase activity is stimulated by TFIIH subunit p52 (GTF2H4). DNA translocase activity by this subunit in TFIIH is stimulated by XPA, ERCC5/XPG and XFP plus ERCC1. Functionally, ATP-dependent 3'-5' DNA helicase/translocase; binds dsDNA rather than ssDNA, unzipping it in a translocase rather than classical helicase activity. Component of the general transcription and DNA repair factor IIH (TFIIH) core complex. When complexed to CDK-activating kinase (CAK), involved in RNA transcription by RNA polymerase II. The ATPase activity of XPB/ERCC3, but not its helicase activity, is required for DNA opening; it may wrap around the damaged DNA wedging it open, causing localized melting and twisting that allows XPD/ERCC2 helicase to anchor. The ATP-dependent helicase activity of XPB/ERCC3 may be required for promoter escape. Also involved in transcription-coupled nucleotide excision repair (NER) of damaged DNA. In NER, TFIIH acts by opening DNA around the lesion to allow the excision of the damaged oligonucleotide and its replacement by a new DNA fragment. The structure of the TFIIH transcription complex differs from the NER-TFIIH complex; large movements by XPD/ERCC2 and XPB/ERCC3 are stabilized by XPA. In Macaca fascicularis (Crab-eating macaque), this protein is General transcription and DNA repair factor IIH helicase/translocase subunit XPB (ERCC3).